Consider the following 238-residue polypeptide: Oxidoreductase dmxR7 (238 aa).

Belongs to the avfA family.

It functions in the pathway secondary metabolite biosynthesis. Its function is as follows. Oxidoreductase; part of the gene cluster that mediates the biosynthesis of the dimeric xanthones cryptosporioptides. The pathway begins with the synthesis of atrochrysone thioester by the polyketide synthase dmx-nrPKS. The atrochrysone carboxyl ACP thioesterase dmxR1 then breaks the thioester bond and releases the atrochrysone carboxylic acid from dmx-nrPKS. Atrochrysone carboxylic acid is decarboxylated by the decarboxylase dmxR15, and oxidized by the anthrone oxygenase dmxR16 to yield emodin. Emodin is then reduced to emodin hydroquinone by the oxidoreductase dmxR7. A-ring reduction by the short chain dehydrogenase dmxR18, dehydration by the scytalone dehydratase-like protein dmxR17 and probable spontaneous re-oxidation, results in overall deoxygenation to chrysophanol. Baeyer-Villiger oxidation by the Baeyer-Villiger monooxygenase (BVMO) dmxR6 then yields monodictylactone in equilibrium with monodictyphenone. In the case of the cryptosporioptides biosynthesis, monodictylactone is reduced at C-12 to an alcohol (by the short chain dehydrogenases dmxR12 or dmxR8) and hydroxylated at C-5 by dmxR9, yielding the electron-rich aromatic which could eliminate H(2)O to form the ortho-quinonemethide, followed by tautomerisation to paraquinone and complete the formal reduction to produce the 10-methylgroup. Conjugate addition of C-4a-OH to the resulting paraquinone by the monooxygenase dmxR10 then gives cyclohexadienone, which is then reduced at C-5 by the short chain dehydrogenase dmxR3 to give the dihydroxanthone. The 6,7-epoxide in the cryptosporioptides could be introduced by the cytochrome P450 monooxygenase dmxL3. The highly reducing PKS dmxL2 manufactures butyrate, which is further carboxylated by dmxL1 to form ethylmalonate. It is not yet clear whether the carboxylation occurs while the butyrate is attached to the ACP of dmxL2, but this unusual fungal metabolite could then be esterified to O-5 by the O-acetyltransferase dmxR13. Finally, dimerization performed by dmxR5 gives the observed dimers cryptosporioptides A, B and C as the final products of the pathway. This is Oxidoreductase dmxR7 from Cryptosporiopsis sp. (strain 8999).